Here is a 93-residue protein sequence, read N- to C-terminus: U12-lycotoxin-Ls1a (93 aa).

The first 18 residues, 1–18, serve as a signal peptide directing secretion; sequence MKFAVILLFSLVVLAVAS. Residues 19 to 38 constitute a propeptide that is removed on maturation; that stretch reads ESVEEVRREIDIEDLPEQQR.

This sequence belongs to the neurotoxin 31 family. Contains 5 disulfide bonds. As to expression, expressed by the venom gland.

It localises to the secreted. The sequence is that of U12-lycotoxin-Ls1a from Lycosa singoriensis (Wolf spider).